Consider the following 865-residue polypeptide: Protein translocase subunit SecA (865 aa).

Residues Gln-93, 111–115, and Asp-501 contribute to the ATP site; that span reads GEGKT. Cys-841, Cys-843, Cys-852, and Cys-853 together coordinate Zn(2+).

This sequence belongs to the SecA family. Monomer and homodimer. Part of the essential Sec protein translocation apparatus which comprises SecA, SecYEG and auxiliary proteins SecDF-YajC and YidC. It depends on Zn(2+) as a cofactor.

It is found in the cell inner membrane. The protein resides in the cytoplasm. It carries out the reaction ATP + H2O + cellular proteinSide 1 = ADP + phosphate + cellular proteinSide 2.. Functionally, part of the Sec protein translocase complex. Interacts with the SecYEG preprotein conducting channel. Has a central role in coupling the hydrolysis of ATP to the transfer of proteins into and across the cell membrane, serving as an ATP-driven molecular motor driving the stepwise translocation of polypeptide chains across the membrane. This chain is Protein translocase subunit SecA, found in Helicobacter pylori (strain ATCC 700392 / 26695) (Campylobacter pylori).